The following is a 152-amino-acid chain: Transcriptional regulator MraZ (152 aa).

SpoVT-AbrB domains lie at 5–52 (ASAI…PIHE) and 81–124 (AHEV…DEQS).

Belongs to the MraZ family. Forms oligomers.

It is found in the cytoplasm. The protein localises to the nucleoid. The protein is Transcriptional regulator MraZ of Shewanella baltica (strain OS195).